The primary structure comprises 385 residues: Photoreceptor ankyrin repeat protein (385 aa).

ANK repeat units follow at residues 17 to 46, 53 to 83, 87 to 116, 122 to 151, and 156 to 190; these read CNLK…SPEE, NGRT…DVNQ, DGNT…GLDL, RGLT…DLSS, and RGKT…QLSL. The tract at residues 270 to 385 is disordered; that stretch reads LGTRGKSVPE…GGLGQAGGSK (116 aa). Over residues 284–297 the composition is skewed to pro residues; it reads APPPPPEPHPPQQV. Residues 304–326 show a composition bias toward polar residues; the sequence is APNQSPQSMFSQWLQSRDSTRSQ. Residues 361–373 show a composition bias toward basic and acidic residues; that stretch reads FQERKKKEEETEP. Residues 374-385 show a composition bias toward gly residues; it reads RGGGLGQAGGSK.

Isoform 1: Expressed predominantly in the retina. Isoform 2: Expressed in the pineal gland.

Its subcellular location is the cytoplasm. It is found in the cytosol. The protein resides in the nucleus. Acts as a transcriptional repressor for CRX-activated photoreceptor gene regulation. In Mus musculus (Mouse), this protein is Photoreceptor ankyrin repeat protein.